The primary structure comprises 393 residues: MGEALDKEYVLHSYGRNYVQFTQGKNATLWDSEGKDYIDFASGIAVCSVGHGNERLAGAICDQAKKLIHTSNLYYIEPQARLAEKLVKLSGYDMRVFFANSGAEANEGAIKIARKFGESHEGEVKRYKIITLESSFHGRTITALKATGQEKMHHYFGPYPDGFVYAKNLDHVFKLVDEKTCAVLLELVQGEGGIEPQDREGIKKLERFLKERGVLLMVDEVQTGIYRSGELFASQAYGIVPDVITVAKGLAGGVPIGAVMTTLKDIFAPGDHGSTFGGNFLSTRAGLEVLSILESLYQEGTLQKSIDRFSAELRALCVEFPSLFECEVGLGLMRGIRAKSAEIQKSVIDEAFKKRVLVLRSGRNTVRFLPPLTLSEREMQEGFSRLREALKGI.

Residues 102-103 and phenylalanine 136 each bind pyridoxal 5'-phosphate; that span reads GA. Arginine 139 serves as a coordination point for N(2)-acetyl-L-ornithine. 219 to 222 lines the pyridoxal 5'-phosphate pocket; it reads DEVQ. An N6-(pyridoxal phosphate)lysine modification is found at lysine 248. A N(2)-acetyl-L-ornithine-binding site is contributed by serine 274. A pyridoxal 5'-phosphate-binding site is contributed by threonine 275.

It belongs to the class-III pyridoxal-phosphate-dependent aminotransferase family. ArgD subfamily. In terms of assembly, homodimer. Requires pyridoxal 5'-phosphate as cofactor.

The protein localises to the cytoplasm. It catalyses the reaction N(2)-acetyl-L-ornithine + 2-oxoglutarate = N-acetyl-L-glutamate 5-semialdehyde + L-glutamate. The protein operates within amino-acid biosynthesis; L-arginine biosynthesis; N(2)-acetyl-L-ornithine from L-glutamate: step 4/4. This is Acetylornithine aminotransferase from Wolinella succinogenes (strain ATCC 29543 / DSM 1740 / CCUG 13145 / JCM 31913 / LMG 7466 / NCTC 11488 / FDC 602W) (Vibrio succinogenes).